The primary structure comprises 384 residues: GDP/UDP-N,N'-diacetylbacillosamine 2-epimerase (hydrolyzing) (384 aa).

Belongs to the UDP-N-acetylglucosamine 2-epimerase family.

It carries out the reaction GDP-N,N'-diacetylbacillosamine + H2O = 2,4-diacetamido-2,4,6-trideoxy-alpha-D-mannopyranose + GDP + H(+). It catalyses the reaction UDP-N,N'-diacetylbacillosamine + H2O = 2,4-diacetamido-2,4,6-trideoxy-alpha-D-mannopyranose + UDP + H(+). Functionally, involved in biosynthesis of legionaminic acid (5,7-diamino-3,5,7,9-tetradeoxy-D-glycero-D-galacto-non-2-ulosonic acid)(Leg), a sialic acid-like derivative that is incorporated into flagellin via O-linkage to Ser/Thr. Catalyzes the conversion of GDP-N,N'-diacetylbacillosamine (Bac2Ac4Ac) into 2,4-diacetamido-2,4,6-trideoxymannose and GDP. It can also use UDP-N,N'-diacetylbacillosamine however it generates small quantities of 2,4-diacetamido-2,4,6-trideoxymannose. The polypeptide is GDP/UDP-N,N'-diacetylbacillosamine 2-epimerase (hydrolyzing) (legG) (Campylobacter jejuni subsp. jejuni serotype O:2 (strain ATCC 700819 / NCTC 11168)).